The following is a 73-amino-acid chain: Large ribosomal subunit protein bL28 (73 aa).

Belongs to the bacterial ribosomal protein bL28 family.

This is Large ribosomal subunit protein bL28 from Buchnera aphidicola subsp. Cinara cedri (strain Cc).